Here is a 229-residue protein sequence, read N- to C-terminus: UPF0758 protein Cbei_0490 (229 aa).

The region spanning Lys-107–Ile-229 is the MPN domain. Zn(2+)-binding residues include His-178, His-180, and Asp-191. A JAMM motif motif is present at residues His-178–Asp-191.

The protein belongs to the UPF0758 family.

The polypeptide is UPF0758 protein Cbei_0490 (Clostridium beijerinckii (strain ATCC 51743 / NCIMB 8052) (Clostridium acetobutylicum)).